Here is a 268-residue protein sequence, read N- to C-terminus: Undecaprenyl-diphosphatase (268 aa).

The next 7 membrane-spanning stretches (helical) occupy residues 7–27 (IFNA…PISS), 87–107 (LIYH…LCIY), 116–136 (FYSI…TEIS), 146–166 (IETP…WPGF), 187–207 (VEFS…LDVI), 210–230 (FYDI…SAFI), and 247–267 (SLIP…LFFM).

The protein belongs to the UppP family.

The protein localises to the cell membrane. The catalysed reaction is di-trans,octa-cis-undecaprenyl diphosphate + H2O = di-trans,octa-cis-undecaprenyl phosphate + phosphate + H(+). Its function is as follows. Catalyzes the dephosphorylation of undecaprenyl diphosphate (UPP). Confers resistance to bacitracin. The protein is Undecaprenyl-diphosphatase of Buchnera aphidicola subsp. Baizongia pistaciae (strain Bp).